A 27-amino-acid chain; its full sequence is Voltage-dependent anion-selective channel protein (27 aa).

Belongs to the eukaryotic mitochondrial porin family. Interacts with hexokinases. In terms of tissue distribution, photoreceptors.

It localises to the mitochondrion outer membrane. In terms of biological role, forms a channel through the cell membrane that allows diffusion of small hydrophilic molecules. This is Voltage-dependent anion-selective channel protein from Doryteuthis pealeii (Longfin inshore squid).